We begin with the raw amino-acid sequence, 276 residues long: MAIRVYKPTTAGRRNASVSDFSELTRSTPEKSLVRKKSKTGGRNSYGRITSRHRGGGHKRQYRLIDFKRWDKDGVPAKVAEIEYDPNRSARIALLHFADGEKRYIIAPKGIKQGDVIETGAQADIKPGNNLPLKNIPTGTVVHAIELRPLGGAKIARSAGAAVQLVAKDGAYAQLRMPSGEIRNVDARCRATVGEVGNEDHANIQLGKAGRARWIGRRPITRGESMNPVDHPHGGRTRGGKPPVSPWGKGEVRTRRPKKASNKMIVRRRPSGKNRK.

Disordered stretches follow at residues 14-58 and 219-276; these read RNAS…GGGH and PITR…KNRK. Positions 16–27 are enriched in polar residues; the sequence is ASVSDFSELTRS. A compositionally biased stretch (basic residues) spans 255 to 276; that stretch reads RRPKKASNKMIVRRRPSGKNRK.

The protein belongs to the universal ribosomal protein uL2 family. As to quaternary structure, part of the 50S ribosomal subunit. Forms a bridge to the 30S subunit in the 70S ribosome.

In terms of biological role, one of the primary rRNA binding proteins. Required for association of the 30S and 50S subunits to form the 70S ribosome, for tRNA binding and peptide bond formation. It has been suggested to have peptidyltransferase activity; this is somewhat controversial. Makes several contacts with the 16S rRNA in the 70S ribosome. This chain is Large ribosomal subunit protein uL2, found in Bifidobacterium longum (strain DJO10A).